The following is a 264-amino-acid chain: Small ribosomal subunit protein eS1 (264 aa).

Residues 232-264 (HGEGGGAGKPSGDEAGTKVERADGYEPPVQESV) are disordered. Basic and acidic residues predominate over residues 242-255 (SGDEAGTKVERADG).

This sequence belongs to the eukaryotic ribosomal protein eS1 family. As to quaternary structure, component of the small ribosomal subunit. Mature ribosomes consist of a small (40S) and a large (60S) subunit. The 40S subunit contains about 33 different proteins and 1 molecule of RNA (18S). The 60S subunit contains about 49 different proteins and 3 molecules of RNA (28S, 5.8S and 5S). Part of the small subunit (SSU) processome, composed of more than 70 proteins and the RNA chaperone small nucleolar RNA (snoRNA) U3.

It is found in the cytoplasm. It localises to the nucleus. The protein localises to the nucleolus. In terms of biological role, component of the small ribosomal subunit. The ribosome is a large ribonucleoprotein complex responsible for the synthesis of proteins in the cell. Part of the small subunit (SSU) processome, first precursor of the small eukaryotic ribosomal subunit. During the assembly of the SSU processome in the nucleolus, many ribosome biogenesis factors, an RNA chaperone and ribosomal proteins associate with the nascent pre-rRNA and work in concert to generate RNA folding, modifications, rearrangements and cleavage as well as targeted degradation of pre-ribosomal RNA by the RNA exosome. May play a role during erythropoiesis. The sequence is that of Small ribosomal subunit protein eS1 from Taeniopygia guttata (Zebra finch).